A 344-amino-acid chain; its full sequence is Arginine N-succinyltransferase (344 aa).

L125 contacts succinyl-CoA. H229 (proton donor) is an active-site residue.

It belongs to the arginine N-succinyltransferase family.

The enzyme catalyses succinyl-CoA + L-arginine = N(2)-succinyl-L-arginine + CoA + H(+). It functions in the pathway amino-acid degradation; L-arginine degradation via AST pathway; L-glutamate and succinate from L-arginine: step 1/5. Functionally, catalyzes the transfer of succinyl-CoA to arginine to produce N(2)-succinylarginine. The protein is Arginine N-succinyltransferase of Escherichia coli (strain UTI89 / UPEC).